The primary structure comprises 368 residues: Aminomethyltransferase (368 aa).

The protein belongs to the GcvT family. The glycine cleavage system is composed of four proteins: P, T, L and H.

It carries out the reaction N(6)-[(R)-S(8)-aminomethyldihydrolipoyl]-L-lysyl-[protein] + (6S)-5,6,7,8-tetrahydrofolate = N(6)-[(R)-dihydrolipoyl]-L-lysyl-[protein] + (6R)-5,10-methylene-5,6,7,8-tetrahydrofolate + NH4(+). Functionally, the glycine cleavage system catalyzes the degradation of glycine. The polypeptide is Aminomethyltransferase (Thermoanaerobacter sp. (strain X514)).